A 354-amino-acid chain; its full sequence is uncharacterized protein (354 aa).

2 disordered regions span residues 1–74 and 87–115; these read MGTK…ENCR and SESGVCTEPEERGQGGKKSQFLPINQRAS. An N6-acetyllysine modification is found at Lys-19. Residues 32 to 41 are compositionally biased toward low complexity; it reads EGPSSNSSFH. Over residues 45–54 the composition is skewed to acidic residues; the sequence is EEGTDLEGDM. Residues Ser-115 and Ser-174 each carry the phosphoserine modification. A compositionally biased stretch (polar residues) spans 182-199; it reads QGSSQDLPMQANLSQSNE. Disordered regions lie at residues 182 to 208 and 235 to 298; these read QGSSQDLPMQANLSQSNEGPLLAGRDR and QVAD…DELS. Tyr-291 bears the Phosphotyrosine mark. Ser-292 carries the phosphoserine modification.

This is an uncharacterized protein from Mus musculus (Mouse).